A 234-amino-acid chain; its full sequence is PHD finger protein ING1 (234 aa).

The segment at 129–166 (NNGKAGNAGEGGRGGRKKTRLATAASTAAASTGMTSSN) is disordered. Residues 149-165 (LATAASTAAASTGMTSS) are compositionally biased toward low complexity. The PHD-type zinc-finger motif lies at 178 to 227 (PTYCICNQVSFGEMVACDNNACKIEWFHFGCVGLKEQPKGKWYCPECATV). Cys181, Cys183, Cys194, Cys199, His205, Cys208, Cys221, and Cys224 together coordinate Zn(2+).

It belongs to the ING family. As to quaternary structure, interacts with H3K4me3 and to a lesser extent with H3K4me2. In terms of tissue distribution, ubiquitously expressed.

The protein localises to the nucleus. Histone-binding component that specifically recognizes H3 tails trimethylated on 'Lys-4' (H3K4me3), which mark transcription start sites of virtually all active genes. This is PHD finger protein ING1 (ING1) from Arabidopsis thaliana (Mouse-ear cress).